The sequence spans 790 residues: DNA ligase 1 (790 aa).

Residues 1–64 (MLAIRSSNYL…AFDALMSNAR (64 aa)) constitute a mitochondrion transit peptide. The disordered stretch occupies residues 64–142 (RAAAKKKTPQ…TGAKKAKTLS (79 aa)). The short motif at 68-75 (KKKTPQTT) is the Nuclear localization signal 1 element. Residues 116 to 128 (DSANPRSDTSSIA) show a composition bias toward polar residues. The segment at 337–346 (KLRLGFSGQT) is interaction with target DNA. Glutamate 442 is a binding site for ATP. The active-site N6-AMP-lysine intermediate is lysine 444. ATP-binding residues include arginine 449 and arginine 465. Mg(2+) is bound at residue glutamate 497. Positions 505 to 512 (KKKILPFQ) match the Nuclear localization signal 2 motif. Residues 518 to 520 (ARK) are interaction with target DNA. Residue glutamate 596 participates in Mg(2+) binding. The ATP site is built by lysine 601, arginine 614, and lysine 620. The disordered stretch occupies residues 757 to 790 (DKKPEEATSSEQIADLYQAQKHNHPSNEVKGDDD). Basic and acidic residues predominate over residues 781–790 (PSNEVKGDDD).

This sequence belongs to the ATP-dependent DNA ligase family. The cofactor is Mg(2+). In terms of tissue distribution, expressed in all vegetative and reproductive tissues.

The protein localises to the mitochondrion. It is found in the nucleus. It carries out the reaction ATP + (deoxyribonucleotide)n-3'-hydroxyl + 5'-phospho-(deoxyribonucleotide)m = (deoxyribonucleotide)n+m + AMP + diphosphate.. Its function is as follows. Essential protein. DNA ligase that seals nicks in double-stranded DNA during DNA replication, DNA recombination and DNA repair. Involved in repair of both single strand breaks (SSBs) and double strand breaks (DSBs). Required in the endosperm for embryogenesis, probably to repair DNA-breaks generated by DME. This Arabidopsis thaliana (Mouse-ear cress) protein is DNA ligase 1 (LIG1).